Reading from the N-terminus, the 461-residue chain is Phosphoenolpyruvate carboxylase (461 aa).

This sequence belongs to the PEPCase type 2 family. As to quaternary structure, homotetramer. Mg(2+) is required as a cofactor.

The enzyme catalyses oxaloacetate + phosphate = phosphoenolpyruvate + hydrogencarbonate. Functionally, catalyzes the irreversible beta-carboxylation of phosphoenolpyruvate (PEP) to form oxaloacetate (OAA), a four-carbon dicarboxylic acid source for the tricarboxylic acid cycle. The sequence is that of Phosphoenolpyruvate carboxylase from Pyrobaculum islandicum (strain DSM 4184 / JCM 9189 / GEO3).